The following is a 953-amino-acid chain: Isoleucine--tRNA ligase (953 aa).

The short motif at 58–68 (PYANGFIHLGH) is the 'HIGH' region element. E573 provides a ligand contact to L-isoleucyl-5'-AMP. Residues 614 to 618 (KMSKS) carry the 'KMSKS' region motif. K617 contacts ATP. Residues C916, C919, C936, and C939 each contribute to the Zn(2+) site.

It belongs to the class-I aminoacyl-tRNA synthetase family. IleS type 1 subfamily. Monomer. Zn(2+) is required as a cofactor.

The protein resides in the cytoplasm. The catalysed reaction is tRNA(Ile) + L-isoleucine + ATP = L-isoleucyl-tRNA(Ile) + AMP + diphosphate. Functionally, catalyzes the attachment of isoleucine to tRNA(Ile). As IleRS can inadvertently accommodate and process structurally similar amino acids such as valine, to avoid such errors it has two additional distinct tRNA(Ile)-dependent editing activities. One activity is designated as 'pretransfer' editing and involves the hydrolysis of activated Val-AMP. The other activity is designated 'posttransfer' editing and involves deacylation of mischarged Val-tRNA(Ile). This is Isoleucine--tRNA ligase from Blochmanniella floridana.